A 275-amino-acid polypeptide reads, in one-letter code: COP9 signalosome complex subunit 7a (275 aa).

Ser-2 carries the post-translational modification N-acetylserine. Positions 2-159 constitute a PCI domain; it reads SAEVKVTGQN…QRLEVDYSIG (158 aa). Residues 185-233 are a coiled coil; sequence LSGIEEQVSRANQHKEQQLGLKQQIESEVANLKKTIKVTTAAAAAATSQ. Residues 228–275 are disordered; sequence AAATSQDPEQHLTELREPASGTNQRQPSKKASKGKGLRGSAKIWSKSN. Positions 235–244 are enriched in basic and acidic residues; the sequence is PEQHLTELRE. The span at 254 to 263 shows a compositional bias: basic residues; it reads PSKKASKGKG.

This sequence belongs to the CSN7/EIF3M family. CSN7 subfamily. Component of the CSN complex, composed of COPS1/GPS1, COPS2, COPS3, COPS4, COPS5, COPS6, COPS7 (COPS7A or COPS7B), COPS8 and COPS9. In the complex, it probably interacts directly with COPS1, COPS2, COPS4, COPS5, COPS6 and COPS8. Interacts with PMF1. Interacts with the translation initiation factor EIF3S6. Interacts with CK2 and PKD. Interacts directly with ID3. In terms of processing, phosphorylated by CK2 and PKD kinases.

The protein resides in the cytoplasm. The protein localises to the nucleus. Its function is as follows. Component of the COP9 signalosome complex (CSN), a complex involved in various cellular and developmental processes. The CSN complex is an essential regulator of the ubiquitin (Ubl) conjugation pathway by mediating the deneddylation of the cullin subunits of SCF-type E3 ligase complexes, leading to decrease the Ubl ligase activity of SCF-type complexes such as SCF, CSA or DDB2. The complex is also involved in phosphorylation of p53/TP53, JUN, I-kappa-B-alpha/NFKBIA, ITPK1 and IRF8/ICSBP, possibly via its association with CK2 and PKD kinases. CSN-dependent phosphorylation of TP53 and JUN promotes and protects degradation by the Ubl system, respectively. In Mus musculus (Mouse), this protein is COP9 signalosome complex subunit 7a (Cops7a).